We begin with the raw amino-acid sequence, 110 residues long: UPF0122 protein GWCH70_1086 (110 aa).

The protein belongs to the UPF0122 family.

Might take part in the signal recognition particle (SRP) pathway. This is inferred from the conservation of its genetic proximity to ftsY/ffh. May be a regulatory protein. This Geobacillus sp. (strain WCH70) protein is UPF0122 protein GWCH70_1086.